Here is a 176-residue protein sequence, read N- to C-terminus: Ribosome maturation factor RimM (176 aa).

The PRC barrel domain maps to 100–173 (KDEYHYHDLI…WLLINPPPGL (74 aa)).

It belongs to the RimM family. Binds ribosomal protein uS19.

Its subcellular location is the cytoplasm. Its function is as follows. An accessory protein needed during the final step in the assembly of 30S ribosomal subunit, possibly for assembly of the head region. Essential for efficient processing of 16S rRNA. May be needed both before and after RbfA during the maturation of 16S rRNA. It has affinity for free ribosomal 30S subunits but not for 70S ribosomes. In Prochlorococcus marinus (strain NATL2A), this protein is Ribosome maturation factor RimM.